Here is a 356-residue protein sequence, read N- to C-terminus: tRNA N6-adenosine threonylcarbamoyltransferase (356 aa).

Residues histidine 115 and histidine 119 each contribute to the Fe cation site. Substrate is bound by residues 138 to 142 (LVSGG), aspartate 171, glycine 184, and asparagine 283. Aspartate 311 provides a ligand contact to Fe cation.

It belongs to the KAE1 / TsaD family. Fe(2+) serves as cofactor.

It is found in the cytoplasm. The catalysed reaction is L-threonylcarbamoyladenylate + adenosine(37) in tRNA = N(6)-L-threonylcarbamoyladenosine(37) in tRNA + AMP + H(+). Functionally, required for the formation of a threonylcarbamoyl group on adenosine at position 37 (t(6)A37) in tRNAs that read codons beginning with adenine. Is involved in the transfer of the threonylcarbamoyl moiety of threonylcarbamoyl-AMP (TC-AMP) to the N6 group of A37, together with TsaE and TsaB. TsaD likely plays a direct catalytic role in this reaction. The polypeptide is tRNA N6-adenosine threonylcarbamoyltransferase (Prochlorococcus marinus (strain MIT 9303)).